A 267-amino-acid chain; its full sequence is MKGSQLYRHLSLQGNRLHLHLFQGKKLQLHPSQGHKGTAHRTWKKGFATSAALPAGYDVRQVEITPLEQRKLTFDTHALVRELETHGFDKVQAETIVSALATLTNASIDTVYRDMVTRAQQEITVQQIMAHLDSIRKDMVILEKSEFATLRAENEKMKIELEHVRQHLLNETNRISADAKLDMNLERSRLTDLFTEQEKKLMEASTEFHKKNATTDSVITEINKKIDIDIASLKTLMESHKLDTVRYMAASVFTCLAIALGFYRLWK.

A mitochondrion-targeting transit peptide spans methionine 1–phenylalanine 47. The stretch at leucine 142 to isoleucine 175 forms a coiled coil. A helical transmembrane segment spans residues threonine 244–tryptophan 266.

It belongs to the CCDC90 family.

It localises to the mitochondrion membrane. This chain is Coiled-coil domain-containing protein 90B, mitochondrial (ccdc90b), found in Xenopus tropicalis (Western clawed frog).